The sequence spans 288 residues: Glucose uptake protein GlcU (288 aa).

10 helical membrane passes run 4–26 (LIAL…VGGG), 33–51 (GTTF…TGNA), 56–75 (LTII…GQGY), 82–104 (LIGV…TLFS), 114–136 (GVQV…LTSI), 148–170 (NFGK…VVVA), 180–197 (ALFF…ILSA), 206–225 (TLWN…FMFY), 230–252 (VGVA…GGIF), and 264–283 (IGIW…SEIL).

Belongs to the GRP transporter (TC 2.A.7.5) family.

It is found in the cell membrane. In terms of biological role, involved in the uptake of glucose. The sequence is that of Glucose uptake protein GlcU (glcU) from Staphylococcus xylosus.